The following is a 203-amino-acid chain: Ras-related protein Rab-30 (203 aa).

Positions 20, 21, 22, 23, 24, and 41 each coordinate GTP. Thr23 serves as a coordination point for Mg(2+). A switch-I region spans residues 36-44; sequence PGQGATIGV. Mg(2+)-binding residues include Thr41 and Asp64. GTP contacts are provided by Gly67, Asn122, Lys123, Asp125, Ala153, and Lys154. The interval 67–83 is switch-II; it reads GQERFRSITQSYYRSAN. Residues Cys199 and Cys200 are each lipidated (S-geranylgeranyl cysteine). Residue Cys200 is modified to Cysteine methyl ester. Positions 201 to 203 are cleaved as a propeptide — removed in mature form; it reads NFN.

This sequence belongs to the small GTPase superfamily. Rab family. Mg(2+) serves as cofactor.

It localises to the membrane. The protein localises to the golgi apparatus. The protein resides in the trans-Golgi network membrane. Its subcellular location is the cis-Golgi network membrane. It is found in the golgi apparatus membrane. It localises to the cytoplasm. The protein localises to the cytoplasmic vesicle. The protein resides in the autophagosome membrane. Its subcellular location is the autolysosome membrane. The enzyme catalyses GTP + H2O = GDP + phosphate + H(+). With respect to regulation, regulated by guanine nucleotide exchange factors (GEFs) which promote the exchange of bound GDP for free GTP. Regulated by GTPase activating proteins (GAPs) which increase the GTP hydrolysis activity. Inhibited by GDP dissociation inhibitors (GDIs). The small GTPases Rab are key regulators of intracellular membrane trafficking, from the formation of transport vesicles to their fusion with membranes. Rabs cycle between an inactive GDP-bound form and an active GTP-bound form that is able to recruit to membranes different sets of downstream effectors directly responsible for vesicle formation, movement, tethering and fusion. RAB30 is required for maintaining the structural integrity of the Golgi apparatus, possibly by mediating interactions with cytoplasmic scaffolding proteins. Facilitates lipid homeostasis during fasting by regulating hepatic protein and lipid trafficking in a PPAR-alpha-dependent manner. Promotes autophagosome biogenesis during bacterial infection such as group A Streptococcus infection. In Bos taurus (Bovine), this protein is Ras-related protein Rab-30 (RAB30).